We begin with the raw amino-acid sequence, 476 residues long: Bifunctional protein HldE (476 aa).

The tract at residues 1-318 is ribokinase; sequence MAQYSAEFKQ…ENAIHARPET (318 aa). 195 to 198 is an ATP binding site; that stretch reads NMSE. D264 is a catalytic residue. The interval 344 to 476 is cytidylyltransferase; the sequence is MTNGCFDILH…VIEKIKLLKD (133 aa).

This sequence in the N-terminal section; belongs to the carbohydrate kinase PfkB family. The protein in the C-terminal section; belongs to the cytidylyltransferase family. As to quaternary structure, homodimer.

It catalyses the reaction D-glycero-beta-D-manno-heptose 7-phosphate + ATP = D-glycero-beta-D-manno-heptose 1,7-bisphosphate + ADP + H(+). The enzyme catalyses D-glycero-beta-D-manno-heptose 1-phosphate + ATP + H(+) = ADP-D-glycero-beta-D-manno-heptose + diphosphate. It functions in the pathway nucleotide-sugar biosynthesis; ADP-L-glycero-beta-D-manno-heptose biosynthesis; ADP-L-glycero-beta-D-manno-heptose from D-glycero-beta-D-manno-heptose 7-phosphate: step 1/4. Its pathway is nucleotide-sugar biosynthesis; ADP-L-glycero-beta-D-manno-heptose biosynthesis; ADP-L-glycero-beta-D-manno-heptose from D-glycero-beta-D-manno-heptose 7-phosphate: step 3/4. In terms of biological role, catalyzes the phosphorylation of D-glycero-D-manno-heptose 7-phosphate at the C-1 position to selectively form D-glycero-beta-D-manno-heptose-1,7-bisphosphate. Its function is as follows. Catalyzes the ADP transfer from ATP to D-glycero-beta-D-manno-heptose 1-phosphate, yielding ADP-D-glycero-beta-D-manno-heptose. The chain is Bifunctional protein HldE from Haemophilus influenzae (strain 86-028NP).